Reading from the N-terminus, the 217-residue chain is Adenylate kinase (217 aa).

10-15 serves as a coordination point for ATP; the sequence is GAGKGT. Positions 30-59 are NMP; the sequence is STGDMLRAAVKAGTPLGLQAKDIMASGGLV. AMP-binding positions include threonine 31, arginine 36, 57–59, 85–88, and glutamine 92; these read GLV and GFPR. Positions 122 to 159 are LID; it reads GRRVHEASGRVYHIIHNAPRVEGHDDVTGEPLVQRPDD. Residues arginine 123 and 132–133 contribute to the ATP site; that span reads VY. AMP contacts are provided by arginine 156 and arginine 167. Glycine 203 is an ATP binding site.

The protein belongs to the adenylate kinase family. In terms of assembly, monomer.

Its subcellular location is the cytoplasm. The enzyme catalyses AMP + ATP = 2 ADP. The protein operates within purine metabolism; AMP biosynthesis via salvage pathway; AMP from ADP: step 1/1. Functionally, catalyzes the reversible transfer of the terminal phosphate group between ATP and AMP. Plays an important role in cellular energy homeostasis and in adenine nucleotide metabolism. The chain is Adenylate kinase from Cellvibrio japonicus (strain Ueda107) (Pseudomonas fluorescens subsp. cellulosa).